A 131-amino-acid chain; its full sequence is Inner membrane protein YecN (131 aa).

Residues 1–107 (MVSALYAVLS…RWRRSGMSAT (107 aa)) are Cytoplasmic-facing. The helical transmembrane segment at 108 to 128 (WCALLLMVLANLWYMPWELVF) threads the bilayer. The Periplasmic portion of the chain corresponds to 129 to 131 (SLR).

It localises to the cell inner membrane. This is Inner membrane protein YecN (yecN) from Escherichia coli O6:H1 (strain CFT073 / ATCC 700928 / UPEC).